A 95-amino-acid polypeptide reads, in one-letter code: UPF0235 protein PTH_1821 (95 aa).

Belongs to the UPF0235 family.

In Pelotomaculum thermopropionicum (strain DSM 13744 / JCM 10971 / SI), this protein is UPF0235 protein PTH_1821.